The following is a 315-amino-acid chain: Cobalamin biosynthesis protein CobD (315 aa).

Helical transmembrane passes span 48-68, 77-97, 150-170, 200-220, and 295-315; these read IAGFFAWLFIVFITFGVTLGI, PILGTVVSGILIYFCISAKGL, DGIIAPLFFAGIGGAPLAFLY, VFNYIPARLTAYLIVISSFIL, and MVSFLGMVVALIIRCILEVII.

This sequence belongs to the CobD/CbiB family.

The protein resides in the cell membrane. It functions in the pathway cofactor biosynthesis; adenosylcobalamin biosynthesis. In terms of biological role, converts cobyric acid to cobinamide by the addition of aminopropanol on the F carboxylic group. The chain is Cobalamin biosynthesis protein CobD from Clostridium perfringens (strain 13 / Type A).